Consider the following 150-residue polypeptide: SsrA-binding protein (150 aa).

The disordered stretch occupies residues 127–150 (KRETEKQRDWQREKARIMKGDAKD).

This sequence belongs to the SmpB family.

The protein resides in the cytoplasm. Its function is as follows. Required for rescue of stalled ribosomes mediated by trans-translation. Binds to transfer-messenger RNA (tmRNA), required for stable association of tmRNA with ribosomes. tmRNA and SmpB together mimic tRNA shape, replacing the anticodon stem-loop with SmpB. tmRNA is encoded by the ssrA gene; the 2 termini fold to resemble tRNA(Ala) and it encodes a 'tag peptide', a short internal open reading frame. During trans-translation Ala-aminoacylated tmRNA acts like a tRNA, entering the A-site of stalled ribosomes, displacing the stalled mRNA. The ribosome then switches to translate the ORF on the tmRNA; the nascent peptide is terminated with the 'tag peptide' encoded by the tmRNA and targeted for degradation. The ribosome is freed to recommence translation, which seems to be the essential function of trans-translation. This chain is SsrA-binding protein, found in Cupriavidus necator (strain ATCC 17699 / DSM 428 / KCTC 22496 / NCIMB 10442 / H16 / Stanier 337) (Ralstonia eutropha).